The following is a 332-amino-acid chain: Phosphatidylglycerol--prolipoprotein diacylglyceryl transferase (332 aa).

3 helical membrane-spanning segments follow: residues 18–38, 66–86, and 111–131; these read FPYF…AYIL, FFTW…TMVY, and VGLR…GGGL. A 1,2-diacyl-sn-glycero-3-phospho-(1'-sn-glycerol) is bound at residue Arg159. Helical transmembrane passes span 249-269 and 302-322; these read GFLV…IEYF and ILCV…SAYH.

This sequence belongs to the Lgt family.

It localises to the cell inner membrane. The enzyme catalyses L-cysteinyl-[prolipoprotein] + a 1,2-diacyl-sn-glycero-3-phospho-(1'-sn-glycerol) = an S-1,2-diacyl-sn-glyceryl-L-cysteinyl-[prolipoprotein] + sn-glycerol 1-phosphate + H(+). It participates in protein modification; lipoprotein biosynthesis (diacylglyceryl transfer). Functionally, catalyzes the transfer of the diacylglyceryl group from phosphatidylglycerol to the sulfhydryl group of the N-terminal cysteine of a prolipoprotein, the first step in the formation of mature lipoproteins. The chain is Phosphatidylglycerol--prolipoprotein diacylglyceryl transferase from Treponema pallidum (strain Nichols).